We begin with the raw amino-acid sequence, 190 residues long: Large ribosomal subunit protein uL5 (190 aa).

The protein belongs to the universal ribosomal protein uL5 family. Part of the 50S ribosomal subunit; part of the 5S rRNA/L5/L18/L25 subcomplex. Contacts the 5S rRNA and the P site tRNA. Forms a bridge to the 30S subunit in the 70S ribosome.

In terms of biological role, this is one of the proteins that bind and probably mediate the attachment of the 5S RNA into the large ribosomal subunit, where it forms part of the central protuberance. In the 70S ribosome it contacts protein S13 of the 30S subunit (bridge B1b), connecting the 2 subunits; this bridge is implicated in subunit movement. Contacts the P site tRNA; the 5S rRNA and some of its associated proteins might help stabilize positioning of ribosome-bound tRNAs. The polypeptide is Large ribosomal subunit protein uL5 (Bifidobacterium longum (strain DJO10A)).